The sequence spans 257 residues: 1-(5-phosphoribosyl)-5-[(5-phosphoribosylamino)methylideneamino] imidazole-4-carboxamide isomerase (257 aa).

Catalysis depends on D8, which acts as the Proton acceptor. D130 serves as the catalytic Proton donor.

The protein belongs to the HisA/HisF family.

The protein resides in the cytoplasm. It catalyses the reaction 1-(5-phospho-beta-D-ribosyl)-5-[(5-phospho-beta-D-ribosylamino)methylideneamino]imidazole-4-carboxamide = 5-[(5-phospho-1-deoxy-D-ribulos-1-ylimino)methylamino]-1-(5-phospho-beta-D-ribosyl)imidazole-4-carboxamide. Its pathway is amino-acid biosynthesis; L-histidine biosynthesis; L-histidine from 5-phospho-alpha-D-ribose 1-diphosphate: step 4/9. The chain is 1-(5-phosphoribosyl)-5-[(5-phosphoribosylamino)methylideneamino] imidazole-4-carboxamide isomerase from Chlorobium chlorochromatii (strain CaD3).